The primary structure comprises 86 residues: Small ribosomal subunit protein uS17 (86 aa).

This sequence belongs to the universal ribosomal protein uS17 family. In terms of assembly, part of the 30S ribosomal subunit.

In terms of biological role, one of the primary rRNA binding proteins, it binds specifically to the 5'-end of 16S ribosomal RNA. This chain is Small ribosomal subunit protein uS17, found in Halorhodospira halophila (strain DSM 244 / SL1) (Ectothiorhodospira halophila (strain DSM 244 / SL1)).